The following is a 150-amino-acid chain: Major facilitator superfamily domain-containing 14C pseudogene (150 aa).

Positions 1-25 (MSVEPPPELEEKAASEPEAGAMPEK) are disordered. Residues 1 to 49 (MSVEPPPELEEKAASEPEAGAMPEKRAGAQAAGSTWLQGFGPPSVYHAA) are Extracellular-facing. Residues 50-70 (IVIFLEFFAWGLLTTPMLTVL) traverse the membrane as a helical segment. Residues 71-82 (HETFSQHTFLMN) lie on the Cytoplasmic side of the membrane. A helical transmembrane segment spans residues 83-103 (GLIQGVKGLLSFLSAPLIGAL). The Extracellular portion of the chain corresponds to 104-111 (SDVWGRKP). The helical transmembrane segment at 112–132 (FLLGTVFFTCFPIPLMRISPC) threads the bilayer. Residues 133–150 (RVWWRAPVVPATCGRRMA) are Cytoplasmic-facing.

This sequence belongs to the major facilitator superfamily.

The protein resides in the membrane. The sequence is that of Major facilitator superfamily domain-containing 14C pseudogene from Homo sapiens (Human).